A 326-amino-acid polypeptide reads, in one-letter code: MIIRAVPVGIGHYLPERVVPNAEFEAMEGLETSDEWIRARSGIERRHFAAEGETTSQMAVTAARKALDHAALNPDDIDAVIVATSTPDLTFPSVATMVQAGLGMTGGFAFDVQAVCAGFVYALANANALIVSGQANRVLVIGAETFSRIMDWTDRTTCVLFGDGAGALILEGRDSAGTPQDRGILSTDLHSDGTHRELLYVDGGVSSTGTTGVLKMQGKEVFRHAIEKLTKTADTGLAKAGVTVGDVDWVVPHQANIRIISGTVKKFGLPMDKVIVTVQDHGNTSAASIPLAMSVGVGDGRIQPGHLLVTEAIGGGLAWGAVVMRW.

Active-site residues include Cys116 and His253. The tract at residues 254-258 (QANIR) is ACP-binding. The active site involves Asn283.

Belongs to the thiolase-like superfamily. FabH family. Homodimer.

Its subcellular location is the cytoplasm. It catalyses the reaction malonyl-[ACP] + acetyl-CoA + H(+) = 3-oxobutanoyl-[ACP] + CO2 + CoA. The protein operates within lipid metabolism; fatty acid biosynthesis. In terms of biological role, catalyzes the condensation reaction of fatty acid synthesis by the addition to an acyl acceptor of two carbons from malonyl-ACP. Catalyzes the first condensation reaction which initiates fatty acid synthesis and may therefore play a role in governing the total rate of fatty acid production. Possesses both acetoacetyl-ACP synthase and acetyl transacylase activities. Its substrate specificity determines the biosynthesis of branched-chain and/or straight-chain of fatty acids. In Jannaschia sp. (strain CCS1), this protein is Beta-ketoacyl-[acyl-carrier-protein] synthase III.